Reading from the N-terminus, the 145-residue chain is Protein FAM216B (145 aa).

The segment at 92–121 is disordered; sequence TKRASAKAGPHRTVPQRAAGRTRTQPSARP.

This sequence belongs to the FAM216 family.

This is Protein FAM216B (FAM216B) from Bos taurus (Bovine).